A 360-amino-acid chain; its full sequence is Mannose-1-phosphate guanylyltransferase catalytic subunit beta (360 aa).

Positions 2–222 (KALILVGGYG…QGFWMDIGQP (221 aa)) are substrate-binding domain. Asp-110 contacts GDP-alpha-D-mannose. Mg(2+) is bound at residue Asp-110. The active site involves Lys-162. GDP-alpha-D-mannose is bound at residue Asp-218. The hexapeptide repeat domain stretch occupies residues 245–360 (YSGPGIVGNV…ESVPEPRIIM (116 aa)).

Belongs to the transferase hexapeptide repeat family. In terms of assembly, component of the GMPPA-GMPPB mannose-1-phosphate guanylyltransferase complex composed of 4 GMPPA subunits and 8 GMPPB subunits; the complex is organized into three layers, a central layer made up of 2 GMPPA dimers sandwiched between two layers each made up of 2 GMPPB dimers. GMPPB catalytic activity is reduced when part of the complex and binding of GDP-alpha-D-Mannose by GMPPA induces allosteric feedback inhibition of GMPPB. Mg(2+) serves as cofactor.

The protein resides in the cytoplasm. The catalysed reaction is alpha-D-mannose 1-phosphate + GTP + H(+) = GDP-alpha-D-mannose + diphosphate. Its pathway is nucleotide-sugar biosynthesis; GDP-alpha-D-mannose biosynthesis; GDP-alpha-D-mannose from alpha-D-mannose 1-phosphate (GTP route): step 1/1. Its activity is regulated as follows. Enzyme activity is reduced by incorporation into the GMPPA-GMPPB mannose-1-phosphate guanylyltransferase complex. Allosterically inhibited, when part of the GMPPA-GMPPB complex, by GDP-alpha-D-mannose binding to GMPPA. Functionally, catalytic subunit of the GMPPA-GMPPB mannose-1-phosphate guanylyltransferase complex. Catalyzes the formation of GDP-mannose, an essential precursor of glycan moieties of glycoproteins and glycolipids. Can catalyze the reverse reaction in vitro. Together with GMPPA regulates GDP-alpha-D-mannose levels. The chain is Mannose-1-phosphate guanylyltransferase catalytic subunit beta from Mus musculus (Mouse).